A 305-amino-acid chain; its full sequence is MGAQLRVYKRRIQAVTATKKITKAMEMIAASRIVKAQRKVAASKPYATELTRAVTAVATGSNAKHPLTTEVETPTRAAVLLVTSDRGLAGGYSSNAIKAAERLRERLASEGKEVDTYIVGRKGVAYYGFRERKVEDSWTGFTDNPAYSDAKSIAAPLIEAIQKETAEGGVDELHIVFTEFVSMMTQNAVDDRMLPLSLDDVAEESTRKGEILPLFDFEPSAEDVLDALLPRYVESRIYNALLQAAASEHAARRRAMKSATDNAGDLIKSLSRLANAARQAEITQEISEIVGGASALADATAGSDK.

It belongs to the ATPase gamma chain family. In terms of assembly, F-type ATPases have 2 components, CF(1) - the catalytic core - and CF(0) - the membrane proton channel. CF(1) has five subunits: alpha(3), beta(3), gamma(1), delta(1), epsilon(1). CF(0) has three main subunits: a, b and c.

Its subcellular location is the cell membrane. Its function is as follows. Produces ATP from ADP in the presence of a proton gradient across the membrane. The gamma chain is believed to be important in regulating ATPase activity and the flow of protons through the CF(0) complex. The protein is ATP synthase gamma chain of Streptomyces griseus subsp. griseus (strain JCM 4626 / CBS 651.72 / NBRC 13350 / KCC S-0626 / ISP 5235).